A 606-amino-acid polypeptide reads, in one-letter code: Phosphoenolpyruvate carboxykinase [GTP] (606 aa).

Substrate-binding positions include R79 and 218–220; that span reads YGG. The Mn(2+) site is built by K227 and H247. S269 is a substrate binding site. GTP is bound at residue 270–275; it reads ACGKTN. Residue C271 is part of the active site. Residue D294 participates in Mn(2+) binding. 384–386 contributes to the substrate binding site; sequence NSR. Residues R386, R417, and 512-515 each bind GTP; that span reads FGEN.

Belongs to the phosphoenolpyruvate carboxykinase [GTP] family. In terms of assembly, monomer. Mn(2+) serves as cofactor.

The protein localises to the cytoplasm. It carries out the reaction oxaloacetate + GTP = phosphoenolpyruvate + GDP + CO2. The protein operates within carbohydrate biosynthesis; gluconeogenesis. Catalyzes the conversion of oxaloacetate (OAA) to phosphoenolpyruvate (PEP), the rate-limiting step in the metabolic pathway that produces glucose from lactate and other precursors derived from the citric acid cycle. The chain is Phosphoenolpyruvate carboxykinase [GTP] from Corynebacterium jeikeium (strain K411).